The chain runs to 352 residues: Lipoyl synthase (352 aa).

Residues 1 to 21 are disordered; sequence MTSVDTPTPHGGTPAPAPATA. Cys71, Cys76, Cys82, Cys97, Cys101, Cys104, and Ser308 together coordinate [4Fe-4S] cluster. The 215-residue stretch at 83–297 folds into the Radical SAM core domain; it reads WEDREATFLI…SRVAEEIGFA (215 aa).

This sequence belongs to the radical SAM superfamily. Lipoyl synthase family. Requires [4Fe-4S] cluster as cofactor.

It is found in the cytoplasm. The enzyme catalyses [[Fe-S] cluster scaffold protein carrying a second [4Fe-4S](2+) cluster] + N(6)-octanoyl-L-lysyl-[protein] + 2 oxidized [2Fe-2S]-[ferredoxin] + 2 S-adenosyl-L-methionine + 4 H(+) = [[Fe-S] cluster scaffold protein] + N(6)-[(R)-dihydrolipoyl]-L-lysyl-[protein] + 4 Fe(3+) + 2 hydrogen sulfide + 2 5'-deoxyadenosine + 2 L-methionine + 2 reduced [2Fe-2S]-[ferredoxin]. The protein operates within protein modification; protein lipoylation via endogenous pathway; protein N(6)-(lipoyl)lysine from octanoyl-[acyl-carrier-protein]: step 2/2. Catalyzes the radical-mediated insertion of two sulfur atoms into the C-6 and C-8 positions of the octanoyl moiety bound to the lipoyl domains of lipoate-dependent enzymes, thereby converting the octanoylated domains into lipoylated derivatives. In Nocardia farcinica (strain IFM 10152), this protein is Lipoyl synthase.